Reading from the N-terminus, the 357-residue chain is Ribosomal RNA large subunit methyltransferase M (357 aa).

Residues serine 183, 216–219 (APGG), aspartate 235, aspartate 255, and aspartate 271 each bind S-adenosyl-L-methionine. Residue lysine 300 is the Proton acceptor of the active site.

It belongs to the class I-like SAM-binding methyltransferase superfamily. RNA methyltransferase RlmE family. RlmM subfamily. In terms of assembly, monomer.

It localises to the cytoplasm. The catalysed reaction is cytidine(2498) in 23S rRNA + S-adenosyl-L-methionine = 2'-O-methylcytidine(2498) in 23S rRNA + S-adenosyl-L-homocysteine + H(+). In terms of biological role, catalyzes the 2'-O-methylation at nucleotide C2498 in 23S rRNA. The sequence is that of Ribosomal RNA large subunit methyltransferase M from Pseudomonas fluorescens (strain ATCC BAA-477 / NRRL B-23932 / Pf-5).